The chain runs to 296 residues: Ribosomal RNA small subunit methyltransferase J (296 aa).

Asp205 is a binding site for S-adenosyl-L-methionine.

This sequence belongs to the methyltransferase superfamily. RsmJ family.

The protein resides in the cytoplasm. It catalyses the reaction guanosine(1516) in 16S rRNA + S-adenosyl-L-methionine = N(2)-methylguanosine(1516) in 16S rRNA + S-adenosyl-L-homocysteine + H(+). In terms of biological role, specifically methylates the guanosine in position 1516 of 16S rRNA. The polypeptide is Ribosomal RNA small subunit methyltransferase J (Psychrobacter arcticus (strain DSM 17307 / VKM B-2377 / 273-4)).